Consider the following 93-residue polypeptide: Small integral membrane protein 36 (93 aa).

A helical membrane pass occupies residues 14–34 (LIILVASYVILLLVFLVSCVL). A disordered region spans residues 70–93 (SHWARGPSLHLKDPAPLGKKSTVV).

It localises to the membrane. This chain is Small integral membrane protein 36, found in Mus musculus (Mouse).